Here is a 392-residue protein sequence, read N- to C-terminus: GDSL esterase/lipase ESM1 (392 aa).

The first 28 residues, 1 to 28 (MADNLNLVSVLGVLLVLTIFHNPIIVYA), serve as a signal peptide directing secretion. The active-site Nucleophile is Ser43. 3 N-linked (GlcNAc...) asparagine glycosylation sites follow: Asn146, Asn166, and Asn290. Catalysis depends on residues Asp324 and His327.

The protein belongs to the 'GDSL' lipolytic enzyme family.

Its subcellular location is the secreted. Represses or inhibits nitriles production from methionine-derived and from indol-3-ylmethyl glucosinolates. Favors isothiocyanate production. This chain is GDSL esterase/lipase ESM1 (ESM1), found in Arabidopsis thaliana (Mouse-ear cress).